Here is a 2383-residue protein sequence, read N- to C-terminus: Reducing polyketide synthase rdc5 (2383 aa).

Residues 10–438 enclose the Ketosynthase family 3 (KS3) domain; sequence RAPIAIIGMS…GTNAHLVLER (429 aa). Catalysis depends on for beta-ketoacyl synthase activity residues C186, H321, and H361. Positions 550 to 881 are malonyl-CoA:ACP transacylase (MAT) domain; it reads FVFTGQGAQW…GFAAELFRRG (332 aa). Residues 930-1066 are N-terminal hotdog fold; that stretch reads KSLIGAERPS…GLFSINYEDS (137 aa). The 324-residue stretch at 930–1253 folds into the PKS/mFAS DH domain; sequence KSLIGAERPS…LAELEVEDAD (324 aa). Residues 932–1250 are dehydratase (DH) domain; that stretch reads LIGAERPSLD…DFHLAELEVE (319 aa). Residue H962 is the Proton acceptor; for dehydratase activity of the active site. The segment at 1094 to 1253 is C-terminal hotdog fold; the sequence is VEVISKQAFY…LAELEVEDAD (160 aa). The Proton donor; for dehydratase activity role is filled by D1160. The interval 1663-1977 is enoyl reductase (ER) domain; it reads GLLNTLHFVS…QGKHVGKMIL (315 aa). The Phosphocysteine intermediate role is filled by C1776. A ketoreductase (KR) domain region spans residues 2002 to 2182; that stretch reads ATYLFIGGLG…VSVNLGIMRD (181 aa). Residues 2300–2377 form the Carrier domain; it reads AAGPIITKAL…QFAVQIAKKS (78 aa). S2337 carries the post-translational modification O-(pantetheine 4'-phosphoryl)serine.

Its pathway is secondary metabolite biosynthesis. Reducing polyketide synthase; part of the gene cluster that mediates the biosynthesis of radicicol, a resorcylic acid lactone (RAL) that irreversibly inhibits the HSP90 molecular chaperone, an important target for cancer chemotherapy. The radicicol cluster encodes only two apparent post-PKS enzymes, a cytochrome P450 monooxygenase (rdc4) and a non-heme halogenase (rdc2) that could introduce the epoxide and the chlorine, respectively. If this cluster includes all the genes required for radicicol biosynthesis, the remaining structural features of radicicol are presumably generated by the PKSs rdc1 and rdc5. The C-2' ketone could arise if the R-PKS rdc5 and NR-PKS rdc1 each carry out four iterations, in contrast to the five iteration-three iteration split for the hypothemycin PKSs. The origin of the cis 5',6' double bond is not known. The radicicol R-PKS rdc5 ER domain may catalyze either double bond isomerization or reduction in the third iteration. The chain is Reducing polyketide synthase rdc5 from Metacordyceps chlamydosporia (Nematophagous fungus).